A 138-amino-acid chain; its full sequence is Phosphoribosyl-AMP cyclohydrolase (138 aa).

Residue aspartate 84 participates in Mg(2+) binding. Zn(2+) is bound at residue cysteine 85. 2 residues coordinate Mg(2+): aspartate 86 and aspartate 88. Zn(2+) contacts are provided by cysteine 102 and cysteine 109.

It belongs to the PRA-CH family. Homodimer. Mg(2+) is required as a cofactor. It depends on Zn(2+) as a cofactor.

The protein localises to the cytoplasm. The enzyme catalyses 1-(5-phospho-beta-D-ribosyl)-5'-AMP + H2O = 1-(5-phospho-beta-D-ribosyl)-5-[(5-phospho-beta-D-ribosylamino)methylideneamino]imidazole-4-carboxamide. It participates in amino-acid biosynthesis; L-histidine biosynthesis; L-histidine from 5-phospho-alpha-D-ribose 1-diphosphate: step 3/9. Its function is as follows. Catalyzes the hydrolysis of the adenine ring of phosphoribosyl-AMP. In Burkholderia vietnamiensis (strain G4 / LMG 22486) (Burkholderia cepacia (strain R1808)), this protein is Phosphoribosyl-AMP cyclohydrolase.